The primary structure comprises 98 residues: Putative protein adenylyltransferase MJ0128 (98 aa).

The GSX(10)DXD motif motif lies at 31-45; the sequence is GSYARNEQTEKSDID. Mg(2+)-binding residues include Asp-43, Asp-45, and Asp-75.

It belongs to the MntA antitoxin family. As to quaternary structure, probably forms a complex with cognate toxin MJ0127. The cofactor is Mg(2+).

The enzyme catalyses L-tyrosyl-[protein] + ATP = O-(5'-adenylyl)-L-tyrosyl-[protein] + diphosphate. It catalyses the reaction O-(5'-adenylyl)-L-tyrosyl-[protein] + ATP = O-[5'-(adenylyl-(5'-&gt;3')-adenylyl)]-L-tyrosyl-[protein] + diphosphate. Probable antitoxin component of a putative type VII toxin-antitoxin (TA) system. Neutralizes cognate toxic MJ0127 by di-AMPylation. This chain is Putative protein adenylyltransferase MJ0128, found in Methanocaldococcus jannaschii (strain ATCC 43067 / DSM 2661 / JAL-1 / JCM 10045 / NBRC 100440) (Methanococcus jannaschii).